The primary structure comprises 643 residues: Phosphatidylinositol-3,5-bisphosphate 3-phosphatase MTMR2 (643 aa).

Positions 1–52 are disordered; that stretch reads MEKSSSCESLGAQLPAARLPSEDSLSSASTSHSENSVHTKSASAISSDSIST. A phosphoserine mark is found at Ser6 and Ser9. Over residues 23–40 the composition is skewed to polar residues; that stretch reads DSLSSASTSHSENSVHTK. Residues 41 to 52 show a composition bias toward low complexity; that stretch reads SASAISSDSIST. Ser58 carries the post-translational modification Phosphoserine. In terms of domain architecture, GRAM spans 68-139; it reads NKLAEMEEPA…GVISRVEKIG (72 aa). Residues 205–580 form the Myotubularin phosphatase domain; the sequence is GWKLYDPLLE…RHLELWVGYY (376 aa). Residues Asn330, Asn355, and Ile356 each contribute to the a 1,2-diacyl-sn-glycero-3-phospho-(1D-myo-inositol-3,5-bisphosphate) site. A 1,2-diacyl-sn-glycero-3-phospho-(1D-myo-inositol-3-phosphate) is bound by residues Asn330, Asn355, and Ile356. Residue Cys417 is the Phosphocysteine intermediate of the active site. The a 1,2-diacyl-sn-glycero-3-phospho-(1D-myo-inositol-3,5-bisphosphate) site is built by Ser418, Asp419, Gly420, Trp421, Asp422, Arg423, Arg459, and Arg463. The a 1,2-diacyl-sn-glycero-3-phospho-(1D-myo-inositol-3-phosphate) site is built by Ser418, Asp419, Gly420, Trp421, Asp422, and Arg423. Arg463 is an a 1,2-diacyl-sn-glycero-3-phospho-(1D-myo-inositol-3-phosphate) binding site. Residues 593–627 adopt a coiled-coil conformation; the sequence is IHSRYKELLAKRAELQRKVEELQREISNRSTSSSE. The interval 614–643 is disordered; it reads LQREISNRSTSSSERASSPAQCVTPVQTVV. Residues 620-631 show a composition bias toward low complexity; the sequence is NRSTSSSERASS. Positions 632-643 are enriched in polar residues; the sequence is PAQCVTPVQTVV.

This sequence belongs to the protein-tyrosine phosphatase family. Non-receptor class myotubularin subfamily. As to quaternary structure, homodimer (via coiled-coil domain). Heterotetramer consisting of one MTMR2 dimer and one SBF2/MTMR13 dimer; specifically in peripheral nerves stabilizes SBF2/MTMR13 at the membranes and increases MTMR2 catalytic activity towards phosphatidylinositol 3,5-bisphosphate and to a lesser extent towards phosphatidylinositol 3-phosphate. Heterodimer with SBF1/MTMR5; acts as an adapter for the phosphatase MTMR2 to regulate MTMR2 catalytic activity and subcellular location. Heterodimer with MTMR12. Phosphorylation at Ser-58 decreases MTMR2 localization to endocytic vesicular structures. Expressed in sciatic nerve and in Schwann cells (at protein level). Detected in adult dorsal root ganglia, neurons of the central nervous system, motor neurons, cell soma and neurites of sensory neurons, olfactory bulb, cerebellum and hippocampus.

The protein resides in the cytoplasm. It localises to the early endosome membrane. The protein localises to the perinuclear region. It is found in the cell projection. Its subcellular location is the axon. The protein resides in the endosome membrane. It carries out the reaction a 1,2-diacyl-sn-glycero-3-phospho-(1D-myo-inositol-3,5-bisphosphate) + H2O = a 1,2-diacyl-sn-glycero-3-phospho-(1D-myo-inositol-5-phosphate) + phosphate. It catalyses the reaction a 1,2-diacyl-sn-glycero-3-phospho-(1D-myo-inositol-3-phosphate) + H2O = a 1,2-diacyl-sn-glycero-3-phospho-(1D-myo-inositol) + phosphate. The catalysed reaction is 1,2-dioctanoyl-sn-glycero-3-phospho-(1-D-myo-inositol-3-phosphate) + H2O = 1,2-dioctanoyl-sn-glycero-3-phospho-(1D-myo-inositol) + phosphate. The enzyme catalyses 1,2-dioctanoyl-sn-glycero-3-phospho-(1D-myo-inositol-3,5-bisphosphate) + H2O = 1,2-dioctanoyl-sn-glycero-3-phospho-(1D-myo-inositol-5-phosphate) + phosphate. Lipid phosphatase that specifically dephosphorylates the D-3 position of phosphatidylinositol 3-phosphate and phosphatidylinositol 3,5-bisphosphate, generating phosphatidylinositol and phosphatidylinositol 5-phosphate. Regulates the level of these phosphoinositides critical for various biological processes including autophagy initiation and autophagosome maturation. The chain is Phosphatidylinositol-3,5-bisphosphate 3-phosphatase MTMR2 from Mus musculus (Mouse).